The chain runs to 418 residues: Gamma-glutamyl phosphate reductase (418 aa).

Belongs to the gamma-glutamyl phosphate reductase family.

It localises to the cytoplasm. It carries out the reaction L-glutamate 5-semialdehyde + phosphate + NADP(+) = L-glutamyl 5-phosphate + NADPH + H(+). It participates in amino-acid biosynthesis; L-proline biosynthesis; L-glutamate 5-semialdehyde from L-glutamate: step 2/2. Its function is as follows. Catalyzes the NADPH-dependent reduction of L-glutamate 5-phosphate into L-glutamate 5-semialdehyde and phosphate. The product spontaneously undergoes cyclization to form 1-pyrroline-5-carboxylate. This is Gamma-glutamyl phosphate reductase from Parafrankia sp. (strain EAN1pec).